The primary structure comprises 229 residues: Ribonuclease T (229 aa).

The region spanning 23-197 (VIIDVETAGF…YDTERTAKLF (175 aa)) is the Exonuclease domain. Asp26, Glu28, His184, and Asp189 together coordinate Mg(2+). His184 (proton donor/acceptor) is an active-site residue.

Belongs to the RNase T family. In terms of assembly, homodimer. Mg(2+) serves as cofactor.

Functionally, trims short 3' overhangs of a variety of RNA species, leaving a one or two nucleotide 3' overhang. Responsible for the end-turnover of tRNA: specifically removes the terminal AMP residue from uncharged tRNA (tRNA-C-C-A). Also appears to be involved in tRNA biosynthesis. The sequence is that of Ribonuclease T from Haemophilus influenzae (strain ATCC 51907 / DSM 11121 / KW20 / Rd).